Reading from the N-terminus, the 397-residue chain is Cysteine protease ATG4A (397 aa).

Cys79 (nucleophile) is an active-site residue. Active-site residues include Asp279 and His281. The short motif at 392-395 (FEIL) is the LIR element.

The protein belongs to the peptidase C54 family.

It localises to the cytoplasm. The catalysed reaction is [protein]-C-terminal L-amino acid-glycyl-phosphatidylethanolamide + H2O = [protein]-C-terminal L-amino acid-glycine + a 1,2-diacyl-sn-glycero-3-phosphoethanolamine. Cysteine protease that plays a key role in autophagy by mediating both proteolytic activation and delipidation of ATG8 family proteins. The protease activity is required for proteolytic activation of ATG8 family proteins: cleaves the C-terminal amino acid of ATG8 proteins to reveal a C-terminal glycine. Exposure of the glycine at the C-terminus is essential for ATG8 proteins conjugation to phosphatidylethanolamine (PE) and insertion to membranes, which is necessary for autophagy. Protease activity is also required to counteract formation of high-molecular weight conjugates of ATG8 proteins (ATG8ylation): acts as a deubiquitinating-like enzyme that removes ATG8 conjugated to other proteins, such as ATG3. In addition to the protease activity, also mediates delipidation of ATG8 family proteins. Catalyzes delipidation of PE-conjugated forms of ATG8 proteins during macroautophagy. This is Cysteine protease ATG4A from Xenopus laevis (African clawed frog).